A 127-amino-acid chain; its full sequence is uncharacterized protein (127 aa).

Positions 1–16 (MLKKIIFGITISLTTG) are cleaved as a signal peptide. Residue C17 is the site of N-palmitoyl cysteine attachment. A lipid anchor (S-diacylglycerol cysteine) is attached at C17. The stretch at 56–101 (EVREEIQKYRVEIVDINKKKRELYNRLSKEAQSFLAEQQKYKQKLS) forms a coiled coil. The disordered stretch occupies residues 102–127 (IPKLLIENDPKNNTANSKDNNDKDMK).

It is found in the cell membrane. This is an uncharacterized protein from Rickettsia prowazekii (strain Madrid E).